Reading from the N-terminus, the 121-residue chain is Small ribosomal subunit protein uS11 (121 aa).

This sequence belongs to the universal ribosomal protein uS11 family. Part of the 30S ribosomal subunit. Interacts with proteins S7 and S18. Binds to IF-3.

Its function is as follows. Located on the platform of the 30S subunit, it bridges several disparate RNA helices of the 16S rRNA. Forms part of the Shine-Dalgarno cleft in the 70S ribosome. This is Small ribosomal subunit protein uS11 from Mycoplasma pneumoniae (strain ATCC 29342 / M129 / Subtype 1) (Mycoplasmoides pneumoniae).